The chain runs to 280 residues: Putative ABC transporter ATP-binding protein MTH_133 (280 aa).

Residues 6–241 enclose the ABC transporter domain; the sequence is IEAVDIRYTY…IDTIRGANLR (236 aa). 39 to 46 is a binding site for ATP; that stretch reads GPNGAGKS.

This sequence belongs to the ABC transporter superfamily.

It is found in the cell membrane. In terms of biological role, probably part of an ABC transporter complex. Responsible for energy coupling to the transport system. The sequence is that of Putative ABC transporter ATP-binding protein MTH_133 from Methanothermobacter thermautotrophicus (strain ATCC 29096 / DSM 1053 / JCM 10044 / NBRC 100330 / Delta H) (Methanobacterium thermoautotrophicum).